The sequence spans 525 residues: GMP synthase [glutamine-hydrolyzing] (525 aa).

A Glutamine amidotransferase type-1 domain is found at 8–206 (PLLILDFGSQ…VVDICKAPTE (199 aa)). Cys-85 (nucleophile) is an active-site residue. Catalysis depends on residues His-180 and Glu-182. The GMPS ATP-PPase domain maps to 207–400 (WTPEHIIDEA…LGLPHDMVYR (194 aa)). ATP is bound at residue 234 to 240 (SGGVDSS).

In terms of assembly, homodimer.

It carries out the reaction XMP + L-glutamine + ATP + H2O = GMP + L-glutamate + AMP + diphosphate + 2 H(+). It participates in purine metabolism; GMP biosynthesis; GMP from XMP (L-Gln route): step 1/1. In terms of biological role, catalyzes the synthesis of GMP from XMP. The polypeptide is GMP synthase [glutamine-hydrolyzing] (Legionella pneumophila (strain Corby)).